The following is a 211-amino-acid chain: Troponin I, cardiac muscle (211 aa).

An N-acetylalanine modification is found at A1. The tract at residues 1-43 (ADESRDAAGEARPAPAPVRRRSSANYRAYATEPHAKSKKKISA) is disordered. S4 carries the post-translational modification Phosphoserine. Phosphoserine; by PHK, PKA and PKD/PRKD1 is present on S22. The residue at position 23 (S23) is a Phosphoserine; by PKA and PKD/PRKD1. Y26 carries the phosphotyrosine modification. T31 bears the Phosphothreonine; by STK4/MST1 mark. The segment at 32–79 (EPHAKSKKKISASRKLQLKTLMLQIAKQELEREAEERRGEKGRALSTR) is involved in binding TNC. Residues S42 and S44 each carry the phosphoserine; by PKC/PRKCE modification. T51 carries the phosphothreonine; by STK4/MST1 modification. S77 is modified (phosphoserine). Phosphothreonine is present on T78. Phosphothreonine; by STK4/MST1 is present on residues T129 and T143. Residues 129 to 150 (TQKIFDLRGKFKRPTLRLRVRI) are involved in binding TNC and actin. S151 is subject to Phosphoserine; by PAK3. At T182 the chain carries Phosphothreonine. S200 is subject to Phosphoserine.

It belongs to the troponin I family. In terms of assembly, interacts with TRIM63. Binds to actin and tropomyosin. Interacts with STK4/MST1. Phosphorylated at Ser-22 and Ser-23 by PRKD1; phosphorylation reduces myofilament calcium sensitivity. Phosphorylated preferentially at Thr-31. Phosphorylation by STK4/MST1 alters its binding affinity to TNNC1 (cardiac Tn-C) and TNNT2 (cardiac Tn-T). Phosphorylated at Ser-42 and Ser-44 by PRKCE; phosphorylation increases myocardium contractile dysfunction. Ser-22 is one of three sites in the region of residues 1-48 that are phosphorylated by phosphorylase kinase.

In terms of biological role, troponin I is the inhibitory subunit of troponin, the thin filament regulatory complex which confers calcium-sensitivity to striated muscle actomyosin ATPase activity. The sequence is that of Troponin I, cardiac muscle (TNNI3) from Oryctolagus cuniculus (Rabbit).